The following is a 312-amino-acid chain: MNWTELSIIINHEAVELATNILENHGSNGVVIEDSDDLINQPEDKYGEIYALKKEDYPDKGVRLKAYFNEMTYDDKLRQQIKDELLNLDELDQHNVQFSEQIIAETDWENEWKNYFHPFRASKKFTIVPSWETYAKEADEELCIELDPGMAFGTGDHPTTSMCLKAIETYVLPQHSVIDVGTGSGILSIASHLIGVKRIKALDIDEMAVSVAKENFRRNHCETLIEAVPGNLLKDETEKFDIVIANILAHIIDEMIEDAYNTLNEGGYFITSGIIKEKYEGIQSHMERVGFKIISEQHDNGWVCLVGQKVSE.

S-adenosyl-L-methionine-binding residues include T160, G181, D203, and N246.

Belongs to the methyltransferase superfamily. PrmA family.

It is found in the cytoplasm. The catalysed reaction is L-lysyl-[protein] + 3 S-adenosyl-L-methionine = N(6),N(6),N(6)-trimethyl-L-lysyl-[protein] + 3 S-adenosyl-L-homocysteine + 3 H(+). Functionally, methylates ribosomal protein L11. This chain is Ribosomal protein L11 methyltransferase, found in Staphylococcus aureus (strain USA300).